The chain runs to 400 residues: NADH-quinone oxidoreductase subunit D (400 aa).

This sequence belongs to the complex I 49 kDa subunit family. As to quaternary structure, NDH-1 is composed of 14 different subunits. Subunits NuoB, C, D, E, F, and G constitute the peripheral sector of the complex.

Its subcellular location is the cell inner membrane. It catalyses the reaction a quinone + NADH + 5 H(+)(in) = a quinol + NAD(+) + 4 H(+)(out). In terms of biological role, NDH-1 shuttles electrons from NADH, via FMN and iron-sulfur (Fe-S) centers, to quinones in the respiratory chain. The immediate electron acceptor for the enzyme in this species is believed to be ubiquinone. Couples the redox reaction to proton translocation (for every two electrons transferred, four hydrogen ions are translocated across the cytoplasmic membrane), and thus conserves the redox energy in a proton gradient. The chain is NADH-quinone oxidoreductase subunit D from Granulibacter bethesdensis (strain ATCC BAA-1260 / CGDNIH1).